Consider the following 394-residue polypeptide: Saposin-like protein 11 (394 aa).

The signal sequence occupies residues 1-18 (MSVFRFLLFLSLLVGSNA). N-linked (GlcNAc...) asparagine glycans are attached at residues Asn25 and Asn272. The region spanning 306–394 (GNMVCDICEK…SFCKHVPFCK (89 aa)) is the Saposin B-type domain. 3 cysteine pairs are disulfide-bonded: Cys310–Cys393, Cys313–Cys387, and Cys343–Cys359.

This chain is Saposin-like protein 11 (spp-11), found in Caenorhabditis elegans.